The primary structure comprises 148 residues: Protein PLANT CADMIUM RESISTANCE 9 (148 aa).

Residues 59–78 form a helical membrane-spanning segment; it reads LAGLMVVAMSSIGCGWYYAS.

The protein belongs to the cornifelin family.

The protein resides in the membrane. Its function is as follows. May be involved in cadmium resistance. The chain is Protein PLANT CADMIUM RESISTANCE 9 (PCR9) from Arabidopsis thaliana (Mouse-ear cress).